Here is a 629-residue protein sequence, read N- to C-terminus: tRNA uridine 5-carboxymethylaminomethyl modification enzyme MnmG (629 aa).

Residues 13-18, valine 125, and serine 180 contribute to the FAD site; that span reads GGGHAG. 273-287 contacts NAD(+); the sequence is GPRYCPSIEDKVMRF. Glutamine 370 lines the FAD pocket.

This sequence belongs to the MnmG family. As to quaternary structure, homodimer. Heterotetramer of two MnmE and two MnmG subunits. Requires FAD as cofactor.

It localises to the cytoplasm. In terms of biological role, NAD-binding protein involved in the addition of a carboxymethylaminomethyl (cmnm) group at the wobble position (U34) of certain tRNAs, forming tRNA-cmnm(5)s(2)U34. In Escherichia coli O45:K1 (strain S88 / ExPEC), this protein is tRNA uridine 5-carboxymethylaminomethyl modification enzyme MnmG.